Reading from the N-terminus, the 370-residue chain is StAR-related lipid transfer protein 7, mitochondrial (370 aa).

The N-terminal 58 residues, 1–58 (MLPRRLLAAWLAGTRGGGLLALLANQCRFVTGLRVRRAQQIAQLYGRLYSESSRRVLL), are a transit peptide targeting the mitochondrion. Positions 86-111 (DEERIQEEELQRSINEMKRLEEMSNM) form a coiled coil. Disordered stretches follow at residues 111-138 (MFQS…EGKE) and 343-370 (MSSE…IEYA). The START domain maps to 112–327 (FQSSGVQHHP…LHMATLKAKN (216 aa)).

Post-translationally, proteolytically cleaved by PARL. In terms of tissue distribution, expressed in nasal epithelial cells. Down-regulated in nasal epithelial cells in patients experiencing an asthma exacerbation as compared to stable asthmatics and healthy controls.

Its subcellular location is the mitochondrion. In terms of biological role, may play a protective role in mucosal tissues by preventing exaggerated allergic responses. The polypeptide is StAR-related lipid transfer protein 7, mitochondrial (STARD7) (Homo sapiens (Human)).